Reading from the N-terminus, the 140-residue chain is Pro-Viral epidermal growth factor (140 aa).

The first 18 residues, 1–18 (MSMKYLMLLFAAMIIRSF), serve as a signal peptide directing secretion. Over 19-100 (ADSGNAIETT…SENPNTTTSY (82 aa)) the chain is Extracellular. An N-linked (GlcNAc...) asparagine; by host glycan is attached at asparagine 34. The 41-residue stretch at 41 to 81 (AIRLCGPEGDGYCLHGDCIHARDIDGMYCRCSHGYTGIRCQ) folds into the EGF-like domain. Intrachain disulfides connect cysteine 45-cysteine 58, cysteine 53-cysteine 69, and cysteine 71-cysteine 80. A glycan (N-linked (GlcNAc...) asparagine; by host) is linked at asparagine 95. The chain crosses the membrane as a helical span at residues 101–121 (IPSPGIMLVLVGIIIITCCLL). Over 122-140 (SVYRFTRRTKLPIQDMVVP) the chain is Cytoplasmic.

Belongs to the orthopoxvirus OPG019 family. As to quaternary structure, viral epidermal growth factor interacts with host EGFR and promotes EGFR dimerization. Cleaved at the cell surface by host ADAM10, thereby releasing the secreted form of VGF.

The protein localises to the host membrane. It localises to the secreted. Its function is as follows. Stimulates cellular proliferation (hyperplasia)and mobility around infected cells to promote rapid and efficient spread of infection. This effect is beneficial for virus replication in vivo, because poxviruses replicate possibly better in proliferating cells than in quiescent cells. Acts by binding host EGFR, inducing its dimerization, autophosphorylation and leading to activation of several cellular pathways regulating cell proliferation or cell survival. The activation by host EGFR of mitogen activated protein kinases (MAPK) and extracellular-signal regulated kinases (ERK) are essential for the positive effect of vaccinia growth factor on poxvirus virulence in vivo. The protein is Pro-Viral epidermal growth factor (OPG019) of Bos taurus (Bovine).